The following is a 587-amino-acid chain: Estrogen receptor (587 aa).

The tract at residues 1–176 (MTLHTKTSGV…SMESTKETRY (176 aa)) is modulating (transactivation AF-1). 2 NR C4-type zinc fingers span residues 177-197 (CAVC…CEGC) and 213-237 (CPAT…LRKC). The segment at residues 177–242 (CAVCNDYASG…RLRKCYEVGM (66 aa)) is a DNA-binding region (nuclear receptor). The interval 243–302 (MKGGIRKDRRGGRVMKQKRQREEQDSRNGEASSTELRAPTLWASPLVVKHNKKNSPALSL) is hinge. Positions 248-277 (RKDRRGGRVMKQKRQREEQDSRNGEASSTE) are disordered. Residues 249 to 261 (KDRRGGRVMKQKR) are compositionally biased toward basic residues. In terms of domain architecture, NR LBD spans 303-539 (TAEQMVSALL…DLLLEMLDAH (237 aa)). A transactivation AF-2 region spans residues 303-587 (TAEQMVSALL…KEEENMQNTL (285 aa)).

This sequence belongs to the nuclear hormone receptor family. NR3 subfamily. As to quaternary structure, binds DNA as a homodimer. Can form a heterodimer with ER-beta.

It is found in the nucleus. Functionally, the steroid hormones and their receptors are involved in the regulation of eukaryotic gene expression and affect cellular proliferation and differentiation in target tissues. The sequence is that of Estrogen receptor (ESR1) from Taeniopygia guttata (Zebra finch).